We begin with the raw amino-acid sequence, 496 residues long: MMSFELSLLSTEIIMAVLGLGLFAVGLILPRGSRQGMFPLTLFALLGTLAYAVYDFFYGGNAAFLQGMYMHDQFAGFFKILFLVAALLVVLSTKNYVAKFQAYRGEFYPLLLLAALGMMLMAGAGDLLTMYVGLELMTITFYILVAYHPNDPKSSEAGIKYLVLGAASSAVLLYGISLIYGLTGSTQMFTVAMSLGAEANTVTILATVMMLAGFGFKISLVPFHMWAPDIYEGAPAPITAFLATASKAAGFAALVRFYVLMMYNHSMAEAGLILLLVLAAITMIIGNLMAFPQKNIQRLMAYSGIAQAGYIIVGVIAVSIASSVSQWGVDPVSAFVDGIKGVLFYLMIYVFANLGAFAVITHVAQSQGSTEIKDYAGLAKRSPLAAAVLTLSVLSLAGIPPLAGFVGKFYLFSAVINQGHVWIAVIGFVMSMISVYYYLSIVKIMYLGDGEGLPEVPVHGAAKFGMIFSMIVTIVLGIYPTPLAQMALTAASSLVK.

Transmembrane regions (helical) follow at residues Leu-8 to Ile-28, Met-37 to Phe-57, Gln-73 to Thr-93, Leu-110 to Met-130, Tyr-131 to Asp-151, Leu-162 to Leu-182, Thr-203 to Phe-223, Pro-235 to Val-255, Gly-271 to Phe-291, Met-300 to Ile-320, Gly-341 to Thr-361, Ala-386 to Val-406, Val-421 to Ile-441, and Phe-464 to Ala-484.

Belongs to the complex I subunit 2 family. NDH-1 is composed of 14 different subunits. Subunits NuoA, H, J, K, L, M, N constitute the membrane sector of the complex.

It is found in the cell membrane. It catalyses the reaction a quinone + NADH + 5 H(+)(in) = a quinol + NAD(+) + 4 H(+)(out). Its function is as follows. NDH-1 shuttles electrons from NADH, via FMN and iron-sulfur (Fe-S) centers, to quinones in the respiratory chain. The immediate electron acceptor for the enzyme in this species is believed to be a menaquinone. Couples the redox reaction to proton translocation (for every two electrons transferred, four hydrogen ions are translocated across the cytoplasmic membrane), and thus conserves the redox energy in a proton gradient. The protein is NADH-quinone oxidoreductase subunit N of Desulfitobacterium hafniense (strain DSM 10664 / DCB-2).